The chain runs to 309 residues: Homoserine O-succinyltransferase (309 aa).

C142 acts as the Acyl-thioester intermediate in catalysis. Substrate contacts are provided by K163 and S192. The active-site Proton acceptor is the H235. E237 is a catalytic residue. R249 contributes to the substrate binding site.

The protein belongs to the MetA family. In terms of assembly, homodimer.

It is found in the cytoplasm. It catalyses the reaction L-homoserine + succinyl-CoA = O-succinyl-L-homoserine + CoA. It functions in the pathway amino-acid biosynthesis; L-methionine biosynthesis via de novo pathway; O-succinyl-L-homoserine from L-homoserine: step 1/1. Transfers a succinyl group from succinyl-CoA to L-homoserine, forming succinyl-L-homoserine. The sequence is that of Homoserine O-succinyltransferase from Escherichia fergusonii (strain ATCC 35469 / DSM 13698 / CCUG 18766 / IAM 14443 / JCM 21226 / LMG 7866 / NBRC 102419 / NCTC 12128 / CDC 0568-73).